The following is a 158-amino-acid chain: Pyruvoyl-dependent arginine decarboxylase (158 aa).

S44 carries the pyruvic acid (Ser) modification.

The protein belongs to the PdaD family. The cofactor is pyruvate.

The enzyme catalyses L-arginine + H(+) = agmatine + CO2. This is Pyruvoyl-dependent arginine decarboxylase from Pyrococcus horikoshii (strain ATCC 700860 / DSM 12428 / JCM 9974 / NBRC 100139 / OT-3).